Consider the following 355-residue polypeptide: MTVLKNDRFLRALLKQPVDVTPVWMMRQAGRYLPEYRATRAKAGDFMSLCMNPELACEVTLQPLDRYPQLDAAILFSDILTVPDAMGLGLYFETGEGPRFRKVVSSPADIEALPVPDPERDLGYVMAAVRTIRRELNGRVPLIGFSGSPWTLATYMVEGGSSKDFRKSKAMLYDNPQAMHALLDKLARAVTAYLNGQILAGAQAVQIFDSWGGSLSSAAYQEFSLAYMKRIVDGLIREHEGRRVPVILFTKGGGLWLEAMAGSGAEALGLDWTCDIGDARARVGGKVALQGNMDPSVLYANPAAIRAEVARILARYGAGSGHVFNLGHGITPEVDPAHAGAFFEAVHELSAQYHR.

Substrate contacts are provided by residues 27–31 (RQAGR), D78, Y155, S210, and H328.

Belongs to the uroporphyrinogen decarboxylase family. In terms of assembly, homodimer.

Its subcellular location is the cytoplasm. It carries out the reaction uroporphyrinogen III + 4 H(+) = coproporphyrinogen III + 4 CO2. It participates in porphyrin-containing compound metabolism; protoporphyrin-IX biosynthesis; coproporphyrinogen-III from 5-aminolevulinate: step 4/4. Catalyzes the decarboxylation of four acetate groups of uroporphyrinogen-III to yield coproporphyrinogen-III. In Azotobacter vinelandii (strain DJ / ATCC BAA-1303), this protein is Uroporphyrinogen decarboxylase.